A 236-amino-acid polypeptide reads, in one-letter code: Sorulation-regulated protein 2 (236 aa).

The N-terminal stretch at 1 to 20 is a signal peptide; that stretch reads MLGLYLSSLFFAFFMAQVFA. N-linked (GlcNAc...) asparagine glycans are attached at residues Asn155, Asn160, Asn203, and Asn212. Asn212 carries GPI-anchor amidated asparagine lipidation. A propeptide spans 213–236 (removed in mature form); that stretch reads SSSSLMPSMGILSFLFGLYLLLHP.

Post-translationally, the GPI-anchor is attached to the protein in the endoplasmic reticulum and serves to target the protein to the cell surface. There, the glucosamine-inositol phospholipid moiety is cleaved off and the GPI-modified mannoprotein is covalently attached via its lipidless GPI glycan remnant to the 1,6-beta-glucan of the outer cell wall layer. N-glycosylated.

Its subcellular location is the spore wall. It is found in the secreted. It localises to the cell wall. The protein localises to the membrane. This chain is Sorulation-regulated protein 2, found in Saccharomyces cerevisiae (strain ATCC 204508 / S288c) (Baker's yeast).